We begin with the raw amino-acid sequence, 252 residues long: Triosephosphate isomerase (252 aa).

Residue 10–12 (NWK) participates in substrate binding. The active-site Electrophile is the His-96. The active-site Proton acceptor is Glu-168. Substrate-binding positions include Gly-174, Ser-214, and 235–236 (GG).

This sequence belongs to the triosephosphate isomerase family. Homodimer.

The protein localises to the cytoplasm. The catalysed reaction is D-glyceraldehyde 3-phosphate = dihydroxyacetone phosphate. It participates in carbohydrate biosynthesis; gluconeogenesis. Its pathway is carbohydrate degradation; glycolysis; D-glyceraldehyde 3-phosphate from glycerone phosphate: step 1/1. In terms of biological role, seems to be capable of enhancing bacteriocin synthesis. Its function is as follows. Involved in the gluconeogenesis. Catalyzes stereospecifically the conversion of dihydroxyacetone phosphate (DHAP) to D-glyceraldehyde-3-phosphate (G3P). The sequence is that of Triosephosphate isomerase from Lactobacillus delbrueckii subsp. lactis.